The primary structure comprises 124 residues: UPF0231 protein Sputcn32_0682 (124 aa).

It belongs to the UPF0231 family.

This is UPF0231 protein Sputcn32_0682 from Shewanella putrefaciens (strain CN-32 / ATCC BAA-453).